Here is a 586-residue protein sequence, read N- to C-terminus: Aspartate--tRNA(Asp/Asn) ligase (586 aa).

E172 contacts L-aspartate. An aspartate region spans residues 196-199; it reads QLYK. R218 is an L-aspartate binding site. ATP is bound by residues 218–220 and Q227; that span reads RDE. H446 provides a ligand contact to L-aspartate. E480 is a binding site for ATP. Residue R487 coordinates L-aspartate. ATP is bound at residue 532 to 535; sequence GIDR.

The protein belongs to the class-II aminoacyl-tRNA synthetase family. Type 1 subfamily. In terms of assembly, homodimer.

The protein resides in the cytoplasm. The catalysed reaction is tRNA(Asx) + L-aspartate + ATP = L-aspartyl-tRNA(Asx) + AMP + diphosphate. Its function is as follows. Aspartyl-tRNA synthetase with relaxed tRNA specificity since it is able to aspartylate not only its cognate tRNA(Asp) but also tRNA(Asn). Reaction proceeds in two steps: L-aspartate is first activated by ATP to form Asp-AMP and then transferred to the acceptor end of tRNA(Asp/Asn). The polypeptide is Aspartate--tRNA(Asp/Asn) ligase (Borreliella burgdorferi (strain ATCC 35210 / DSM 4680 / CIP 102532 / B31) (Borrelia burgdorferi)).